Consider the following 432-residue polypeptide: MGKNVVVLGTQWGDEGKGKVVDLLTERAKYVVRYQGGHNAGHTLVINGEKTVLHLIPSGILRENVVSIIGNGVVLAPDALMKEMTELEARGVPVRERLLLSEACPLILPYHVALDNAREKARGAKAIGTTGRGIGPAYEDKVARRGLRVGDLFDKETFAVKLKEIVEYHNFQLVNYYKVDAVDYQKVLDDVLAIADILTAMVVDVSDLLYKAHLRGDFVMFEGAQGTLLDIDHGTYPYVTSSNTTAGGVATGSGLGPRYVDYVLGIVKAYSTRVGAGPFPTELFEEVGEHLSQKGNEFGATTGRRRRTGWLDAVAVRRAVQINSLSGFCLTKLDVLDGLKEIKICVGYRLPNGTEVDTTPLAAEGWEGLEPIYETVPGWSESTFGVKDHSKLPQAALNYIKRIEEITGVPIDIISTGPDRSETMVLRDPFDA.

GTP is bound by residues 13 to 19 and 41 to 43; these read GDEGKGK and GHT. Aspartate 14 acts as the Proton acceptor in catalysis. Residues aspartate 14 and glycine 41 each coordinate Mg(2+). IMP is bound by residues 14–17, 39–42, threonine 130, arginine 144, glutamine 225, threonine 240, and arginine 304; these read DEGK and NAGH. Histidine 42 serves as the catalytic Proton donor. 300–306 is a binding site for substrate; the sequence is ATTGRRR. GTP is bound by residues arginine 306, 332–334, and 415–417; these read KLD and STG.

This sequence belongs to the adenylosuccinate synthetase family. Homodimer. Mg(2+) serves as cofactor.

The protein resides in the cytoplasm. It catalyses the reaction IMP + L-aspartate + GTP = N(6)-(1,2-dicarboxyethyl)-AMP + GDP + phosphate + 2 H(+). The protein operates within purine metabolism; AMP biosynthesis via de novo pathway; AMP from IMP: step 1/2. In terms of biological role, plays an important role in the de novo pathway of purine nucleotide biosynthesis. Catalyzes the first committed step in the biosynthesis of AMP from IMP. The polypeptide is Adenylosuccinate synthetase (Pectobacterium atrosepticum (strain SCRI 1043 / ATCC BAA-672) (Erwinia carotovora subsp. atroseptica)).